The sequence spans 542 residues: uncharacterized protein (542 aa).

Residues 1–78 (MSVQKEEYDI…EEKKLVRKMD (78 aa)) lie on the Extracellular side of the membrane. The helical transmembrane segment at 79–99 (LKIFLWVFIMFAFLDLIRKNI) threads the bilayer. The Cytoplasmic portion of the chain corresponds to 100-119 (ARAVSDNFIVDLKMNTNDYN). A helical membrane pass occupies residues 120–140 (LGQTVYLVIFLASELPGNLLS). At 141–147 (KRFGPER) the chain is on the extracellular side. Residues 148-168 (VIPVQIVLWSVICITQAGLKN) traverse the membrane as a helical segment. The Cytoplasmic segment spans residues 169-176 (RGQFIATR). Residues 177–197 (CLLGMVQGGFIPDNILYLSYY) form a helical membrane-spanning segment. The Extracellular portion of the chain corresponds to 198–208 (YTGAELTFRLS). The helical transmembrane segment at 209–229 (FFWCAIPLFQILGSLLASGII) threads the bilayer. At 230–241 (EMRGIHNLAGWQ) the chain is on the cytoplasmic side. The helical transmembrane segment at 242–262 (YLFIIEGFLSLSVGVASFYLM) threads the bilayer. Topologically, residues 263–326 (RRGPTQTGES…TLTEFDLWPL (64 aa)) are extracellular. The helical transmembrane segment at 327–347 (FIQGITAFISLQTVGSYLSLI) threads the bilayer. The Cytoplasmic segment spans residues 348-359 (LKSLNYSTFLSN). A helical membrane pass occupies residues 360–380 (ILAIPGQALLLINLPLAALLS). Residues 381-387 (RKLKEKS) lie on the Extracellular side of the membrane. A helical membrane pass occupies residues 388 to 408 (LCVGIANVWVLPFIVSLVALP). Topologically, residues 409–416 (TDTNPWIK) are cytoplasmic. The chain crosses the membrane as a helical span at residues 417–437 (YILLTGILGLPYTHSILAGWV). Topologically, residues 438–482 (SEISNSVRSRTVGTALYNMSAQVGAIIASNMYRNDDKPYYTRGNK) are extracellular. A helical transmembrane segment spans residues 483–503 (ILLGFTCFNICMAVATKFYYI). The Cytoplasmic segment spans residues 504–542 (SRNKYKDRKWNSMTKEEQINYLDTTKDKGMKRLDYRFIH).

The protein belongs to the major facilitator superfamily. Allantoate permease family.

It is found in the membrane. This is an uncharacterized protein from Saccharomyces cerevisiae (strain ATCC 204508 / S288c) (Baker's yeast).